A 469-amino-acid polypeptide reads, in one-letter code: MQLQRLGAPLLKRLVGGCIRQSTAPIMPCVVVSGSGGFLTPVRTYMPLPNDQSDFSPYIEIDLPSESRIQSLHKSGLAAQEWVACEKVHGTNFGIYLINQGDHEVVRFAKRSGIMDPNENFFGYHILIDEFTAQIRILNDLLKQKYGLSRVGRLVLNGELFGAKYKHPLVPKSEKWCTLPNGKKFPIAGVQIQREPFPQYSPELHFFAFDIKYSVSGAEEDFVLLGYDEFVEFSSKVPNLLYARALVRGTLDECLAFDVENFMTPLPALLGLGNYPLEGNLAEGVVIRHVRRGDPAVEKHNVSTIIKLRCSSFMELKHPGKQKELKETFIDTVRSGALRRVRGNVTVISDSMLPQVEAAANDLLLNNVSDGRLSNVLSKIGREPLLSGEVSQVDVALMLAKDALKDFLKEVDSLVLNTTLAFRKLLITNVYFESKRLVEQKWKELMQEEAAAQSEAIPPLSPAAPTKGE.

A mitochondrion-targeting transit peptide spans 1–44 (MQLQRLGAPLLKRLVGGCIRQSTAPIMPCVVVSGSGGFLTPVRT). Residues 59 to 61 (IEI), 86 to 92 (EKVHGTN), Asn-92, Arg-111, Glu-159, Phe-209, and 307 to 309 (KLR) contribute to the ATP site. Lys-87 serves as the catalytic N6-AMP-lysine intermediate. Residues 450–469 (AAAQSEAIPPLSPAAPTKGE) form a disordered region.

It belongs to the RNA ligase 2 family. Component of the RNA editing complex (editosome), a 1600 kDa complex composed of at least 20 proteins. Interacts with terminal uridylyltransferase MEAT1.

Its subcellular location is the mitochondrion. The enzyme catalyses ATP + (ribonucleotide)n-3'-hydroxyl + 5'-phospho-(ribonucleotide)m = (ribonucleotide)n+m + AMP + diphosphate.. Functionally, essential for RNA editing. RNA editing in kinetoplastid mitochondria inserts and deletes uridylates at multiple sites in pre-mRNAs as directed by guide RNAs. This Trypanosoma brucei brucei (strain 927/4 GUTat10.1) protein is RNA-editing ligase 1, mitochondrial (REL1).